Reading from the N-terminus, the 424-residue chain is UPF0597 protein Shewmr7_2876 (424 aa).

Belongs to the UPF0597 family.

The protein is UPF0597 protein Shewmr7_2876 of Shewanella sp. (strain MR-7).